Consider the following 250-residue polypeptide: Probable aquaporin TIP1-1 (250 aa).

2 consecutive transmembrane segments (helical) span residues 25 to 44 (AEFISTLIFVFAGQGSGMAF) and 58 to 77 (LIAAAVAHAFALFVAVSVGA). The NPA 1 signature appears at 85-87 (NPA). The next 3 membrane-spanning stretches (helical) occupy residues 103–121 (GLLYWIAQLLGSTVACFLL), 144–163 (LVLEIVMTFGLVYTVYATAV), and 170–192 (LGTIAPIAIGFIVGANILVGGAF). An NPA 2 motif is present at residues 198–200 (NPA). Residues 216–233 (WVYWVGPLIGGGLAGVIY) form a helical membrane-spanning segment.

The protein belongs to the MIP/aquaporin (TC 1.A.8) family. TIP (TC 1.A.8.10) subfamily. As to expression, expressed in roots and leaves.

It is found in the vacuole membrane. In terms of biological role, aquaporins facilitate the transport of water and small neutral solutes across cell membranes. May be involved in transport from the vacuolar compartment to the cytoplasm. The polypeptide is Probable aquaporin TIP1-1 (TIP1-1) (Oryza sativa subsp. japonica (Rice)).